A 744-amino-acid polypeptide reads, in one-letter code: Prestin (744 aa).

The Cytoplasmic segment spans residues 1 to 75; it reads MDHAEENEIP…PITKWLPAYK (75 aa). Residues 76-104 form a helical membrane-spanning segment; it reads FKEYVLGDLVSGISTGVLQLPQGLAFAML. Residues 105-108 lie on the Extracellular side of the membrane; the sequence is AAVP. Residues 109–126 form a helical membrane-spanning segment; it reads PVFGLYSSFYPVIMYCFF. Residues 127-137 are Cytoplasmic-facing; the sequence is GTSRHISIGPF. The chain crosses the membrane as a helical span at residues 138–149; sequence AVISLMIGGVAV. At 150-168 the chain is on the extracellular side; the sequence is RLVPDDIVIPGGVNATNGT. The Involved in motor function motif lies at 158-168; it reads IPGGVNATNGT. Residues N163 and N166 are each glycosylated (N-linked (GlcNAc...) asparagine). Residues 169 to 196 form a helical membrane-spanning segment; sequence EARDALRVKVAMSVTLLSGIIQFCLGVC. At 197 to 206 the chain is on the cytoplasmic side; it reads RFGFVAIYLT. The chain crosses the membrane as a helical span at residues 207–230; that stretch reads EPLVRGFTTAAAVHVFTSMLKYLF. The Extracellular portion of the chain corresponds to 231 to 241; sequence GVKTKRYSGIF. Residues 242–253 constitute an intramembrane region (helical); sequence SVVYSTVAVLQN. Residues 254-258 are Extracellular-facing; that stretch reads VKNLN. A helical transmembrane segment spans residues 259 to 276; that stretch reads VCSLGVGLMVFGLLLGGK. The Cytoplasmic portion of the chain corresponds to 277 to 291; that stretch reads EFNERFKEKLPAPIP. Residues 292-307 traverse the membrane as a helical segment; sequence LEFFAVVMGTGISAGF. Over 308 to 332 the chain is Extracellular; the sequence is NLHESYSVDVVGTLPLGLLPPANPD. The chain crosses the membrane as a helical span at residues 333–359; it reads TSLFHLVYVDAIAIAIVGFSVTISMAK. The Cytoplasmic segment spans residues 360–370; that stretch reads TLANKHGYQVD. Residues 371-388 traverse the membrane as a helical segment; the sequence is GNQELIALGICNSIGSLF. Over 389-396 the chain is Extracellular; that stretch reads QTFSISCS. A helical membrane pass occupies residues 397–406; it reads LSRSLVQEGT. Position 398 (S398) interacts with salicylate. At 407-410 the chain is on the cytoplasmic side; sequence GGKT. A helical membrane pass occupies residues 411–431; sequence QLAGCLASLMILLVILATGFL. Residues 432-436 are Extracellular-facing; it reads FESLP. The chain crosses the membrane as a helical span at residues 437-464; it reads QAVLSAIVIVNLKGMFMQFSDLPFFWRT. Position 465 (S465) is a topological domain, cytoplasmic. A helical transmembrane segment spans residues 466 to 481; sequence KIELTIWLTTFVSSLF. Residues 482 to 484 are Extracellular-facing; the sequence is LGL. A helical membrane pass occupies residues 485–504; it reads DYGLITAVIIALLTVIYRTQ. Residues 505-718 form an extended region for STAS domain region; it reads SPSYTVLGQL…AVLGSQVREA (214 aa). Topologically, residues 505 to 744 are cytoplasmic; that stretch reads SPSYTVLGQL…PNATPTTPEA (240 aa). In terms of domain architecture, STAS spans 525–713; it reads AYEEVKEIPG…HSIHDAVLGS (189 aa). The disordered stretch occupies residues 720-744; that stretch reads AEQETTVLPPQEDMEPNATPTTPEA.

This sequence belongs to the SLC26A/SulP transporter (TC 2.A.53) family. As to quaternary structure, homodimer. Interacts (via STAS domain) with CALM; this interaction is calcium-dependent and the STAS domain interacts with only one lobe of CALM which is an elongated conformation. Interacts with MYH1. Specifically expressed in outer hair cells of cochleae (at protein level). Not detected in other cells of the organ of Corti.

Its subcellular location is the lateral cell membrane. It carries out the reaction 2 hydrogencarbonate(in) + chloride(out) = 2 hydrogencarbonate(out) + chloride(in). Its activity is regulated as follows. Salicylate, an inhibitor of outer hair cell motility, acts as a competitive antagonist at the prestin anion-binding site. Its function is as follows. Voltage-sensitive motor protein that drives outer hair cell (OHC) electromotility (eM) and participates in sound amplification in the hearing organ. Converts changes in the transmembrane electric potential into mechanical displacements resulting in the coupling of its expansion to movement of a charged voltage sensor across the lipid membrane. The nature of the voltage sensor is not completely clear, and two models compete. In the first model, acts as an incomplete transporter where intracellular chloride anion acts as extrinsic voltage sensor that drives conformational change in the protein which is sufficient to produce a length change in the plane of the membrane and hence in the length of the OHC. The second model in which multiple charged amino acid residues are distributed at the intracellular and extracellular membrane interfaces that form an intrinsic voltage sensor, whose movement produces the non-linear capacitance (NLC). However, the effective voltage sensor may be the result of a hybrid voltage sensor assembled from intrinsic charge (charged residues) and extrinsic charge (bound anion). Notably, binding of anions to the anion-binding pocket partially neutralizes the intrinsic positive charge rather than to form an electrically negative sensor, therefore remaining charge may serve as voltage sensor that, after depolarization, moves from down (expanded state) to up (contracted) conformation, which is accompanied by an eccentric contraction of the intermembrane cross-sectional area of the protein as well as a major increase in the hydrophobic thickness of the protein having as consequences the plasma membrane thickening and the cell contraction after membrane depolarization. The anion-binding pocket transits from the inward-open (Down) state, where it is exposed toward the intracellular solvent in the absence of anion, to the occluded (Up) state upon anion binding. Salicylate competes for the anion-binding site and inhibits the voltage-sensor movement, and therefore inhibits the charge transfer and electromotility by displacing Cl(-) from the anion-binding site and by preventing the structural transitions to the contracted state. In addition, can act as a weak Cl(-)/HCO3(-) antiporter across the cell membrane and so regulate the intracellular pH of the outer hair cells (OHCs), while firstly found as being unable to mediate electrogenic anion transport. Moreover, supports a role in cardiac mechanical amplification serving as an elastic element to enhance the actomyosin- based sarcomere contraction system. The polypeptide is Prestin (Rattus norvegicus (Rat)).